A 422-amino-acid chain; its full sequence is Golgi-associated RAB2 interactor protein 2 (422 aa).

Residues 353–404 (PVESEANTSKEMKDKTSEEKMPDFQSTALKAEESRSLRTESNTSVLSPHIKS) form a disordered region. Positions 360 to 374 (TSKEMKDKTSEEKMP) are enriched in basic and acidic residues.

This sequence belongs to the GARIN family. Interacts with CALM1. Expressed in spermatozoa (at protein level).

The protein resides in the cell projection. Its subcellular location is the cilium. It is found in the flagellum. Its function is as follows. Seems to play a role in sperm motility. This is Golgi-associated RAB2 interactor protein 2 from Homo sapiens (Human).